The sequence spans 348 residues: EGF-like domain-containing protein 1 (348 aa).

Positions 1–19 (MFYLSTFMTIVISLSLVSC) are cleaved as a signal peptide. The 33-residue stretch at 60-92 (TGSNCTVTCQNNGKCYDGSKCLCSSDYTGDLCE) folds into the EGF-like domain. Intrachain disulfides connect Cys-64–Cys-74, Cys-68–Cys-80, and Cys-82–Cys-91. Residues 99–342 (RCTLDAVVFE…PTCAAPXVGQ (244 aa)) form the ZP domain.

Prismatic layer of shell (at protein level). Expressed primarily in the mantle with highest level in the mantle edge and lower level in the mantle pallium.

The protein resides in the secreted. This Pinctada maxima (Silver-lipped pearl oyster) protein is EGF-like domain-containing protein 1.